The primary structure comprises 354 residues: P2Y purinoceptor 13 (354 aa).

At 1–49 (MTAAIRRQRELSILPKVTLEAMNTTVMQGFNRSERCPRDTRIVQLVFPA) the chain is on the extracellular side. N-linked (GlcNAc...) asparagine glycans are attached at residues N23 and N31. Residues 50-70 (LYTVVFLTGILLNTLALWVFV) traverse the membrane as a helical segment. Over 71–77 (HIPSSST) the chain is Cytoplasmic. Residues 78 to 98 (FIIYLKNTLVADLIMTLMLPF) traverse the membrane as a helical segment. The Extracellular portion of the chain corresponds to 99-117 (KILSDSHLAPWQLRAFVCR). Residues C116 and C194 are joined by a disulfide bond. Residues 118 to 138 (FSSVIFYETMYVGIVLLGLIA) traverse the membrane as a helical segment. Residues 139–161 (FDRFLKIIRPLRNIFLKKPVFAK) are Cytoplasmic-facing. Residues 162-182 (TVSIFIWFFLFFISLPNTILS) form a helical membrane-spanning segment. The Extracellular segment spans residues 183 to 211 (NKEATPSSVKKCASLKGPLGLKWHQMVNN). The chain crosses the membrane as a helical span at residues 212-232 (ICQFIFWTVFILMLVFYVVIA). Residues 233–252 (KKVYDSYRKSKSKDRKNNKK) lie on the Cytoplasmic side of the membrane. A helical transmembrane segment spans residues 253–273 (LEGKVFVVVAVFFVCFAPFHF). Over 274–300 (ARVPYTHSQTNNKTDCRLQNQLFIAKE) the chain is Extracellular. N285 carries an N-linked (GlcNAc...) asparagine glycan. Residues 301-321 (TTLFLAATNICMDPLIYIFLC) form a helical membrane-spanning segment. Topologically, residues 322–333 (KKFTEKLPCMQG) are cytoplasmic. The interval 335 to 354 (KTTASSQENHSSQTDNITLG) is disordered.

The protein belongs to the G-protein coupled receptor 1 family. In terms of tissue distribution, strong expression in spleen and adult brain. Lower expression in placenta, lung, liver, spinal cord, thymus, small intestine, uterus, stomach, testis, fetal brain, and adrenal gland. Not detected in pancreas, heart, kidney, skeletal muscle, ovary or fetal aorta. Clearly detected in lymph node and bone marrow, weakly detected in peripheral blood mononuclear cells (PBMC) and in peripheral blood leukocytes (PBL), but not detected in polymorphonuclear cells (PMN). In the brain, detected in all brain regions examined.

It is found in the cell membrane. Its function is as follows. Receptor for ADP. Coupled to G(i)-proteins. May play a role in hematopoiesis and the immune system. This is P2Y purinoceptor 13 (P2RY13) from Homo sapiens (Human).